We begin with the raw amino-acid sequence, 481 residues long: ATP synthase subunit beta, chloroplastic (481 aa).

161–168 (GGAGVGKT) serves as a coordination point for ATP.

Belongs to the ATPase alpha/beta chains family. In terms of assembly, F-type ATPases have 2 components, CF(1) - the catalytic core - and CF(0) - the membrane proton channel. CF(1) has five subunits: alpha(3), beta(3), gamma(1), delta(1), epsilon(1). CF(0) has four main subunits: a(1), b(1), b'(1) and c(9-12).

It is found in the plastid. It localises to the chloroplast thylakoid membrane. The catalysed reaction is ATP + H2O + 4 H(+)(in) = ADP + phosphate + 5 H(+)(out). Produces ATP from ADP in the presence of a proton gradient across the membrane. The catalytic sites are hosted primarily by the beta subunits. The chain is ATP synthase subunit beta, chloroplastic from Mesostigma viride (Green alga).